Here is a 272-residue protein sequence, read N- to C-terminus: Putative G-protein coupled receptor GPR32P1 (272 aa).

The segment at 1 to 24 is disordered; that stretch reads MNGVSEGTRGCSDRQPGALTQGHS. Residues 1 to 46 are Extracellular-facing; that stretch reads MNGVSEGTRGCSDRQPGALTQGHSCSRKMNASRCLSEEVGSLRPLT. Asparagine 30 carries N-linked (GlcNAc...) asparagine glycosylation. Residues 47 to 67 traverse the membrane as a helical segment; the sequence is MAVLSASFVVGVLGNGLVPWV. The Cytoplasmic segment spans residues 68–78; the sequence is TVFRMARTVST. The helical transmembrane segment at 79 to 99 threads the bilayer; it reads VCFFHLALADFMLSLSLPILV. Residues 100–116 are Extracellular-facing; it reads YYIVSRQWLLGEWACKL. Cysteine 114 and cysteine 191 are oxidised to a cystine. The helical transmembrane segment at 117–137 threads the bilayer; that stretch reads YTGFVFLTFSTSNCLLVLISV. Over 138–158 the chain is Cytoplasmic; sequence DRCISVLYPVWALNHRTEQRA. A helical membrane pass occupies residues 159 to 179; it reads SWLAFGVWLLAAALCSAHLKF. The Extracellular segment spans residues 180–213; that stretch reads RTTRKWNGCMQCYLQFNLENETAQMWTQEVFGRQ. N-linked (GlcNAc...) asparagine glycosylation occurs at asparagine 199. The chain crosses the membrane as a helical span at residues 214–234; the sequence is MAVIMAHFLLGFLGPLAIIGT. The Cytoplasmic segment spans residues 235 to 272; that stretch reads CAHLIRAKLLREGWVHANRPKRLLLVLVSALSAGSHLT.

This sequence belongs to the G-protein coupled receptor 1 family.

The protein resides in the cell membrane. Functionally, orphan receptor. The sequence is that of Putative G-protein coupled receptor GPR32P1 (GPR32P1) from Homo sapiens (Human).